A 202-amino-acid polypeptide reads, in one-letter code: GMP synthase [glutamine-hydrolyzing] subunit A (202 aa).

The Glutamine amidotransferase type-1 domain occupies Lys4–Lys194. Cys81 serves as the catalytic Nucleophile. Active-site residues include His168 and Glu170.

As to quaternary structure, heterodimer composed of a glutamine amidotransferase subunit (A) and a GMP-binding subunit (B).

The enzyme catalyses XMP + L-glutamine + ATP + H2O = GMP + L-glutamate + AMP + diphosphate + 2 H(+). It functions in the pathway purine metabolism; GMP biosynthesis; GMP from XMP (L-Gln route): step 1/1. Its function is as follows. Catalyzes the synthesis of GMP from XMP. The chain is GMP synthase [glutamine-hydrolyzing] subunit A from Thermoplasma volcanium (strain ATCC 51530 / DSM 4299 / JCM 9571 / NBRC 15438 / GSS1).